The sequence spans 444 residues: MREIVHIQAGQCGNQIGAKFWEVISDEHGVDPTGTYHGDSDLQLERINVYFNEATGRKICPRAMLMDLEPGTMDSVRAGPFGQLFRPDNFVFGQSGAGNNWAKGHYTEGAELIDSVLDVVRKEAEGCDCLQGFQITHSLGGGTGSGMGTLLISKIREKYPDRIMETFSVFPSPKVSDTVVEPYNATLSVHQLVENADEVMCIDNEALYDICFRTLKPTTPTYGDLNHLVSAVISGVTSCLRFPGQLNSDLRKLAVNLIPFPRLHFFMIGFAPLTSRGSQQYRALTVPELTQQMFDAKNMMCASDPRHGRYLTASAMFRGRMSTKEVDEQMLNVQNKNSSYFVEWIPNNIKSSVCDIPPKGLKMSSTFIGNSTAIQEMFKRVAEQFTAMFRRKAFLHWYTGEGMDEMEFTEAESNMNDLVSEYQQYQDATAEEEGEFDDEEEMDV.

GTP contacts are provided by Gln-11, Glu-69, Ser-138, Gly-142, Thr-143, Gly-144, Asn-204, and Asn-226. Glu-69 lines the Mg(2+) pocket. The interval 423 to 444 (QQYQDATAEEEGEFDDEEEMDV) is disordered. Over residues 429-444 (TAEEEGEFDDEEEMDV) the composition is skewed to acidic residues.

Belongs to the tubulin family. In terms of assembly, dimer of alpha and beta chains. A typical microtubule is a hollow water-filled tube with an outer diameter of 25 nm and an inner diameter of 15 nM. Alpha-beta heterodimers associate head-to-tail to form protofilaments running lengthwise along the microtubule wall with the beta-tubulin subunit facing the microtubule plus end conferring a structural polarity. Microtubules usually have 13 protofilaments but different protofilament numbers can be found in some organisms and specialized cells. Mg(2+) serves as cofactor.

Its subcellular location is the cytoplasm. It localises to the cytoskeleton. Tubulin is the major constituent of microtubules, a cylinder consisting of laterally associated linear protofilaments composed of alpha- and beta-tubulin heterodimers. Microtubules grow by the addition of GTP-tubulin dimers to the microtubule end, where a stabilizing cap forms. Below the cap, tubulin dimers are in GDP-bound state, owing to GTPase activity of alpha-tubulin. The protein is Tubulin beta chain of Euplotes focardii.